A 171-amino-acid chain; its full sequence is UPF0398 protein SPy_1647/M5005_Spy1353 (171 aa).

Belongs to the UPF0398 family.

The polypeptide is UPF0398 protein SPy_1647/M5005_Spy1353 (Streptococcus pyogenes serotype M1).